The sequence spans 362 residues: Endolytic peptidoglycan transglycosylase RlpA (362 aa).

A signal peptide spans 1-17 (MRKQWLGICIAAGMLAA). A lipid anchor (N-palmitoyl cysteine) is attached at Cys-18. Cys-18 carries the S-diacylglycerol cysteine lipid modification. The segment at 198-276 (PDLSGGAGTS…PSTTPATSPA (79 aa)) is disordered. Positions 262-276 (PVVTAPSTTPATSPA) are enriched in low complexity. An SPOR domain is found at 285–361 (QSASGNFMVQ…AQLQSFITTA (77 aa)).

Belongs to the RlpA family.

The protein resides in the cell membrane. Lytic transglycosylase with a strong preference for naked glycan strands that lack stem peptides. In Escherichia coli (strain K12), this protein is Endolytic peptidoglycan transglycosylase RlpA.